The chain runs to 352 residues: Ion-translocating oxidoreductase complex subunit D (352 aa).

4 consecutive transmembrane segments (helical) span residues 20–40 (IMLLVVIAALPGIAAQTWFFG), 42–62 (GTLFQIVLAAITALVAEAIVL), 69–91 (VASHLQDYSALLTGLLLAVSIPP), and 123–143 (PAMIGYVVLLISFPVQMTSWL). Thr-187 is subject to FMN phosphoryl threonine. The next 5 helical transmembrane spans lie at 215 to 235 (LAGVGWQWVNLAWLVGGVFLL), 242 to 262 (WHIPVSFLLTLALCAALGWLF), 267 to 287 (LASPQLHLLSGATMLGAFFIL), 301 to 321 (LIFGALAGVLVWLIRSFGGYP), and 322 to 342 (DGVAFAVLLANITVPLIDYYT).

Belongs to the NqrB/RnfD family. As to quaternary structure, the complex is composed of six subunits: RsxA, RsxB, RsxC, RsxD, RsxE and RsxG. The cofactor is FMN.

The protein localises to the cell inner membrane. In terms of biological role, part of a membrane-bound complex that couples electron transfer with translocation of ions across the membrane. Required to maintain the reduced state of SoxR. This Salmonella agona (strain SL483) protein is Ion-translocating oxidoreductase complex subunit D.